Consider the following 365-residue polypeptide: Mannitol dehydrogenase (365 aa).

Residues Cys-50, His-72, Cys-103, Cys-106, Cys-109, Cys-117, and Cys-166 each coordinate Zn(2+).

The protein belongs to the zinc-containing alcohol dehydrogenase family. Zn(2+) serves as cofactor.

The protein resides in the cytoplasm. The catalysed reaction is D-mannitol + NAD(+) = D-mannose + NADH + H(+). Its function is as follows. Oxidizes mannitol to mannose. Provides the initial step by which translocated mannitol is committed to central metabolism and, by regulating mannitol pool size, is important in regulating salt tolerance at the cellular level. This is Mannitol dehydrogenase (MTD) from Apium graveolens (Celery).